Reading from the N-terminus, the 161-residue chain is uncharacterized protein (161 aa).

2 disordered regions span residues 1–67 (MNSN…IQNF) and 80–147 (DSHQ…KKKQ). A compositionally biased stretch (low complexity) spans 84–126 (NFNDNGFNNNNNNNNSNMNHNFSNQNNYNNNNNNNNNNNSNFN). The segment covering 135–147 (GTSSQVGNNKKKQ) has biased composition (polar residues).

This is an uncharacterized protein from Dictyostelium discoideum (Social amoeba).